The following is a 349-amino-acid chain: Fe(3+) ions import ATP-binding protein FbpC (349 aa).

One can recognise an ABC transporter domain in the interval 4 to 236; the sequence is LDFNKIGKSY…PIDEPTATFL (233 aa). 36 to 43 contacts ATP; sequence GPSGSGKT.

This sequence belongs to the ABC transporter superfamily. Fe(3+) ion importer (TC 3.A.1.10) family. As to quaternary structure, the complex is composed of two ATP-binding proteins (FbpC), two transmembrane proteins (FbpB) and a solute-binding protein (FbpA).

It localises to the cell inner membrane. The enzyme catalyses Fe(3+)(out) + ATP + H2O = Fe(3+)(in) + ADP + phosphate + H(+). Its function is as follows. Part of the ABC transporter complex FbpABC involved in Fe(3+) ions import. Responsible for energy coupling to the transport system. In Yersinia enterocolitica, this protein is Fe(3+) ions import ATP-binding protein FbpC.